The following is a 289-amino-acid chain: uncharacterized protein (289 aa).

The active site involves glutamate 48.

It belongs to the PhzF family.

This is an uncharacterized protein from Pasteurella multocida (strain Pm70).